The chain runs to 200 residues: Protein Nef (200 aa).

Gly-2 carries the N-myristoyl glycine; by host lipid modification. Ser-6 carries the phosphoserine; by host modification. An acidic; interacts with host PACS1 and PACS2; stabilizes the interaction of NEF/MHC-I with host AP1M1; necessary for MHC-I internalization region spans residues Glu-58 to Glu-60. The tract at residues Pro-64–Pro-73 is SH3-binding; interaction with Src family tyrosine kinases. Positions Pro-67–Pro-70 match the PxxP; stabilizes the interaction of NEF/MHC-I with host AP1M1; necessary for MHC-I internalization motif. The interval Glu-103–Trp-119 is mediates dimerization, Nef-PTE1 interaction. The segment at Val-143–Val-175 is binding to ATP6V1H. The short motif at Leu-159 to Leu-160 is the Dileucine internalization motif; necessary for CD4 internalization element. The Diacidic; necessary for CD4 internalization signature appears at Glu-169–Asp-170.

The protein belongs to the lentivirus primate group Nef protein family. In terms of assembly, monomer; cytosolic form. Homodimer; membrane bound form. Interacts with Nef associated p21-activated kinase (PAK2); this interaction activates PAK2. Associates with the Nef-MHC-I-AP1 complex; this complex is required for MHC-I internalization. Interacts (via C-terminus) with host PI3-kinase. Interacts with host PACS1; this interaction seems to be weak. Interacts with host PACS2. Interacts with host LCK and MAPK3; these interactions inhibit the kinase activity of the latter. Interacts with host ATP6V1H; this interaction may play a role in CD4 endocytosis. Associates with the CD4-Nef-AP2 complex; this complex is required for CD4 internalization. Interacts with host AP2 subunit alpha and AP2 subunit sigma2. Interacts with TCR-zeta chain; this interaction up-regulates the Fas ligand (FasL) surface expression. Interacts with host HCK, LYN, and SRC; these interactions activate the Src family kinases. Interacts with MAP3K5; this interaction inhibits the Fas and TNFR-mediated death signals. Interacts with beta-COP and PTE1. Interacts with human RACK1; this increases Nef phosphorylation by PKC. Interacts with TP53; this interaction decreases the half-life of TP53, protecting the infected cell against p53-mediated apoptosis. The virion-associated Nef proteins are cleaved by the viral protease to release the soluble C-terminal core protein. Nef is probably cleaved concomitantly with viral structural proteins on maturation of virus particles. Post-translationally, myristoylated. In terms of processing, phosphorylated on serine residues, probably by host PKCdelta and theta.

The protein resides in the host cell membrane. The protein localises to the virion. It localises to the secreted. It is found in the host Golgi apparatus membrane. Factor of infectivity and pathogenicity, required for optimal virus replication. Alters numerous pathways of T-lymphocyte function and down-regulates immunity surface molecules in order to evade host defense and increase viral infectivity. Alters the functionality of other immunity cells, like dendritic cells, monocytes/macrophages and NK cells. Functionally, in infected CD4(+) T-lymphocytes, down-regulates the surface MHC-I, mature MHC-II, CD4, CD28, CCR5 and CXCR4 molecules. Mediates internalization and degradation of host CD4 through the interaction of with the cytoplasmic tail of CD4, the recruitment of AP-2 (clathrin adapter protein complex 2), internalization through clathrin coated pits, and subsequent transport to endosomes and lysosomes for degradation. Diverts host MHC-I molecules to the trans-Golgi network-associated endosomal compartments by an endocytic pathway to finally target them for degradation. MHC-I down-regulation may involve AP-1 (clathrin adapter protein complex 1) or possibly Src family kinase-ZAP70/Syk-PI3K cascade recruited by PACS2. In consequence infected cells are masked for immune recognition by cytotoxic T-lymphocytes. Decreasing the number of immune receptors also prevents reinfection by more HIV particles (superinfection). Down-regulates host SERINC3 and SERINC5 thereby excluding these proteins from the viral particles. Virion infectivity is drastically higher when SERINC3 or SERINC5 are excluded from the viral envelope, because these host antiviral proteins impair the membrane fusion event necessary for subsequent virion penetration. Its function is as follows. Bypasses host T-cell signaling by inducing a transcriptional program nearly identical to that of anti-CD3 cell activation. Interaction with TCR-zeta chain up-regulates the Fas ligand (FasL). Increasing surface FasL molecules and decreasing surface MHC-I molecules on infected CD4(+) cells send attacking cytotoxic CD8+ T-lymphocytes into apoptosis. In terms of biological role, plays a role in optimizing the host cell environment for viral replication without causing cell death by apoptosis. Protects the infected cells from apoptosis in order to keep them alive until the next virus generation is ready to strike. Inhibits the Fas and TNFR-mediated death signals by blocking MAP3K5/ASK1. Decreases the half-life of TP53, protecting the infected cell against p53-mediated apoptosis. Inhibits the apoptotic signals regulated by the Bcl-2 family proteins through the formation of a Nef/PI3-kinase/PAK2 complex that leads to activation of PAK2 and induces phosphorylation of host BAD. Extracellular Nef protein targets CD4(+) T-lymphocytes for apoptosis by interacting with CXCR4 surface receptors. The protein is Protein Nef of Human immunodeficiency virus type 1 group M subtype F2 (isolate MP255) (HIV-1).